Reading from the N-terminus, the 47-residue chain is Large ribosomal subunit protein bL34 (47 aa).

Residues 1–28 are disordered; it reads MAKGKRTFQPNNRRRARVHGFRTRMRTR.

This sequence belongs to the bacterial ribosomal protein bL34 family.

In Corynebacterium efficiens (strain DSM 44549 / YS-314 / AJ 12310 / JCM 11189 / NBRC 100395), this protein is Large ribosomal subunit protein bL34.